Consider the following 451-residue polypeptide: Zinc finger MYND domain-containing protein 10 homolog (451 aa).

Positions 412, 415, 423, 426, 432, 436, 444, and 448 each coordinate Zn(2+). The MYND-type zinc finger occupies 412 to 448; that stretch reads CATCQAKAKKKCACCKKVHYCSRDCQLKDWPQHKLVC.

This sequence belongs to the ZMYND10 family. In terms of tissue distribution, specifically expressed in cells with flagella and motile cilia: chordotonal sensory neurons and sperm.

It is found in the cytoplasm. The protein localises to the cell projection. The protein resides in the cilium. It localises to the dynein axonemal particle. Functionally, plays a role in axonemal structure organization and motility. May be involved in axonemal pre-assembly of inner and outer dynein arms (IDA and ODA, respectively) for proper axoneme building for cilia motility. The sequence is that of Zinc finger MYND domain-containing protein 10 homolog from Drosophila melanogaster (Fruit fly).